The primary structure comprises 213 residues: ATP synthase peripheral stalk subunit OSCP, mitochondrial (213 aa).

Residues 1–23 constitute a mitochondrion transit peptide; the sequence is MAAPAASGLSRQVRSFSTSVVRP. An SIFI-degron motif is present at residues 5–23; that stretch reads AASGLSRQVRSFSTSVVRP. Lys54, Lys60, Lys70, and Lys73 each carry N6-acetyllysine. Lys90 carries the post-translational modification N6-succinyllysine. Residues Lys100, Lys158, and Lys162 each carry the N6-acetyllysine; alternate modification. N6-succinyllysine; alternate occurs at positions 100, 158, and 162. An N6-acetyllysine mark is found at Lys172, Lys176, and Lys192. Lys199 is subject to N6-succinyllysine.

The protein belongs to the ATPase delta chain family. In terms of assembly, component of the ATP synthase complex composed at least of ATP5F1A/subunit alpha, ATP5F1B/subunit beta, ATP5MC1/subunit c (homooctomer), MT-ATP6/subunit a, MT-ATP8/subunit 8, ATP5ME/subunit e, ATP5MF/subunit f, ATP5MG/subunit g, ATP5MK/subunit k, ATP5MJ/subunit j, ATP5F1C/subunit gamma, ATP5F1D/subunit delta, ATP5F1E/subunit epsilon, ATP5PF/subunit F6, ATP5PB/subunit b, ATP5PD/subunit d, ATP5PO/subunit OSCP. ATP synthase complex consists of a soluble F(1) head domain (subunits alpha(3) and beta(3)) - the catalytic core - and a membrane F(0) domain - the membrane proton channel (subunits c, a, 8, e, f, g, k and j). These two domains are linked by a central stalk (subunits gamma, delta, and epsilon) rotating inside the F1 region and a stationary peripheral stalk (subunits F6, b, d, and OSCP). Acetylation of Lys-70 and Lys-158 is observed in liver mitochondria from fasted mice but not from fed mice. In terms of processing, acetylation at Lys-162 decreases ATP production. Deacetylated by SIRT3. Post-translationally, in response to mitochondrial stress, the precursor protein is ubiquitinated by the SIFI complex in the cytoplasm before mitochondrial import, leading to its degradation. Within the SIFI complex, UBR4 initiates ubiquitin chain that are further elongated or branched by KCMF1.

The protein resides in the mitochondrion. It localises to the mitochondrion inner membrane. Functionally, subunit OSCP, of the mitochondrial membrane ATP synthase complex (F(1)F(0) ATP synthase or Complex V) that produces ATP from ADP in the presence of a proton gradient across the membrane which is generated by electron transport complexes of the respiratory chain. ATP synthase complex consist of a soluble F(1) head domain - the catalytic core - and a membrane F(1) domain - the membrane proton channel. These two domains are linked by a central stalk rotating inside the F(1) region and a stationary peripheral stalk. During catalysis, ATP synthesis in the catalytic domain of F(1) is coupled via a rotary mechanism of the central stalk subunits to proton translocation. In vivo, can only synthesize ATP although its ATP hydrolase activity can be activated artificially in vitro. Part of the complex F(0) domain. Part of the complex F(0) domain and the peripheric stalk, which acts as a stator to hold the catalytic alpha(3)beta(3) subcomplex and subunit a/ATP6 static relative to the rotary elements. This chain is ATP synthase peripheral stalk subunit OSCP, mitochondrial, found in Mus musculus (Mouse).